Consider the following 862-residue polypeptide: DNA mismatch repair protein MutS (862 aa).

ATP is bound at residue 618–625 (GPNMGGKS). Positions 799 to 824 (QLESRDNQASPAVASAPQQQSLSLSP) are disordered. Over residues 806–824 (QASPAVASAPQQQSLSLSP) the composition is skewed to low complexity.

The protein belongs to the DNA mismatch repair MutS family.

Functionally, this protein is involved in the repair of mismatches in DNA. It is possible that it carries out the mismatch recognition step. This protein has a weak ATPase activity. This is DNA mismatch repair protein MutS from Shewanella denitrificans (strain OS217 / ATCC BAA-1090 / DSM 15013).